A 98-amino-acid polypeptide reads, in one-letter code: MMRLNWQIRQVQLLLERLGLQQLVWMDCLVMMLNKAIFLDRDGVINKRLIGDYVKKIEEFELLPNVREALIEFKKMGYLLIVVTNQQGSKQFLIFYNL.

This is an uncharacterized protein from Methanocaldococcus jannaschii (strain ATCC 43067 / DSM 2661 / JAL-1 / JCM 10045 / NBRC 100440) (Methanococcus jannaschii).